A 336-amino-acid chain; its full sequence is uncharacterized protein (336 aa).

An N-terminal signal peptide occupies residues 1 to 33 (MGSAWPAEIRKIAKISKRLLGATVILGFGVAEA).

This is an uncharacterized protein from Sinorhizobium fredii (strain NBRC 101917 / NGR234).